Consider the following 921-residue polypeptide: Protein translocase subunit SecA (921 aa).

ATP contacts are provided by residues Gln-87, 105 to 109 (GEGKT), and Asp-516. Zn(2+)-binding residues include Cys-905, Cys-907, Cys-916, and His-917.

It belongs to the SecA family. In terms of assembly, monomer and homodimer. Part of the essential Sec protein translocation apparatus which comprises SecA, SecYEG and auxiliary proteins SecDF-YajC and YidC. Requires Zn(2+) as cofactor.

The protein resides in the cell inner membrane. It localises to the cytoplasm. It catalyses the reaction ATP + H2O + cellular proteinSide 1 = ADP + phosphate + cellular proteinSide 2.. Its function is as follows. Part of the Sec protein translocase complex. Interacts with the SecYEG preprotein conducting channel. Has a central role in coupling the hydrolysis of ATP to the transfer of proteins into and across the cell membrane, serving both as a receptor for the preprotein-SecB complex and as an ATP-driven molecular motor driving the stepwise translocation of polypeptide chains across the membrane. The protein is Protein translocase subunit SecA of Polaromonas sp. (strain JS666 / ATCC BAA-500).